A 577-amino-acid chain; its full sequence is Arginine--tRNA ligase (577 aa).

The short motif at 122–132 is the 'HIGH' region element; that stretch reads PNVAKEMHVGH.

This sequence belongs to the class-I aminoacyl-tRNA synthetase family. As to quaternary structure, monomer.

It localises to the cytoplasm. It carries out the reaction tRNA(Arg) + L-arginine + ATP = L-arginyl-tRNA(Arg) + AMP + diphosphate. This Haemophilus influenzae (strain PittEE) protein is Arginine--tRNA ligase.